A 602-amino-acid chain; its full sequence is Elongation factor 4 (602 aa).

The 183-residue stretch at 2–184 (KKIRNFAIIA…RIVRDIPPPK (183 aa)) folds into the tr-type G domain. GTP-binding positions include 14–19 (DHGKST) and 131–134 (NKID).

Belongs to the TRAFAC class translation factor GTPase superfamily. Classic translation factor GTPase family. LepA subfamily.

It is found in the cell membrane. The catalysed reaction is GTP + H2O = GDP + phosphate + H(+). Required for accurate and efficient protein synthesis under certain stress conditions. May act as a fidelity factor of the translation reaction, by catalyzing a one-codon backward translocation of tRNAs on improperly translocated ribosomes. Back-translocation proceeds from a post-translocation (POST) complex to a pre-translocation (PRE) complex, thus giving elongation factor G a second chance to translocate the tRNAs correctly. Binds to ribosomes in a GTP-dependent manner. This Baumannia cicadellinicola subsp. Homalodisca coagulata protein is Elongation factor 4.